The following is a 456-amino-acid chain: Bifunctional protein GlmU (456 aa).

Residues 1-230 (MDKRFAVVLA…FQETLGVNDR (230 aa)) form a pyrophosphorylase region. Residues 9–12 (LAAG), K23, Q73, and 78–79 (GT) contribute to the UDP-N-acetyl-alpha-D-glucosamine site. D103 serves as a coordination point for Mg(2+). Residues G140, E155, N170, and N228 each coordinate UDP-N-acetyl-alpha-D-glucosamine. Residue N228 coordinates Mg(2+). The linker stretch occupies residues 231–251 (VALSQAEQFMKERINKRHMQN). The N-acetyltransferase stretch occupies residues 252-456 (GVTLIDPMNT…DDYVKNIHKK (205 aa)). UDP-N-acetyl-alpha-D-glucosamine-binding residues include R333 and K351. The active-site Proton acceptor is the H363. Residues Y366 and N377 each coordinate UDP-N-acetyl-alpha-D-glucosamine. Residues 386–387 (NY), A423, and R440 each bind acetyl-CoA.

The protein in the N-terminal section; belongs to the N-acetylglucosamine-1-phosphate uridyltransferase family. This sequence in the C-terminal section; belongs to the transferase hexapeptide repeat family. In terms of assembly, homotrimer. Mg(2+) is required as a cofactor.

It is found in the cytoplasm. The catalysed reaction is alpha-D-glucosamine 1-phosphate + acetyl-CoA = N-acetyl-alpha-D-glucosamine 1-phosphate + CoA + H(+). It catalyses the reaction N-acetyl-alpha-D-glucosamine 1-phosphate + UTP + H(+) = UDP-N-acetyl-alpha-D-glucosamine + diphosphate. It participates in nucleotide-sugar biosynthesis; UDP-N-acetyl-alpha-D-glucosamine biosynthesis; N-acetyl-alpha-D-glucosamine 1-phosphate from alpha-D-glucosamine 6-phosphate (route II): step 2/2. It functions in the pathway nucleotide-sugar biosynthesis; UDP-N-acetyl-alpha-D-glucosamine biosynthesis; UDP-N-acetyl-alpha-D-glucosamine from N-acetyl-alpha-D-glucosamine 1-phosphate: step 1/1. The protein operates within bacterial outer membrane biogenesis; LPS lipid A biosynthesis. Catalyzes the last two sequential reactions in the de novo biosynthetic pathway for UDP-N-acetylglucosamine (UDP-GlcNAc). The C-terminal domain catalyzes the transfer of acetyl group from acetyl coenzyme A to glucosamine-1-phosphate (GlcN-1-P) to produce N-acetylglucosamine-1-phosphate (GlcNAc-1-P), which is converted into UDP-GlcNAc by the transfer of uridine 5-monophosphate (from uridine 5-triphosphate), a reaction catalyzed by the N-terminal domain. The sequence is that of Bifunctional protein GlmU from Bacillus subtilis (strain 168).